Here is a 113-residue protein sequence, read N- to C-terminus: Inner membrane protein YiaB (113 aa).

At 1–9 (MKTSKTVAK) the chain is on the cytoplasmic side. A helical membrane pass occupies residues 10–20 (LLFVVGALVYL). The Periplasmic segment spans residues 21 to 33 (VGLWISCPLLSGK). A helical membrane pass occupies residues 34-51 (GYFLGVLMTATFGNYAYL). At 52-61 (RAEKLGQLDD) the chain is on the cytoplasmic side. The helical transmembrane segment at 62–82 (FFTHICQLVALITIGLLFIGV) threads the bilayer. Residues 83–84 (LN) are Periplasmic-facing. A helical transmembrane segment spans residues 85-105 (APINTYEMVIYPIAFFVCLFG). The Cytoplasmic portion of the chain corresponds to 106 to 113 (QMRLFRSA).

It is found in the cell inner membrane. This Escherichia coli (strain K12) protein is Inner membrane protein YiaB (yiaB).